The sequence spans 537 residues: Inositol phosphorylceramide glucuronosyltransferase 1 (537 aa).

Residues 6-26 (TSLWVLLLALVSIQLNGSFGS) form a helical membrane-spanning segment. Mn(2+) is bound by residues D124 and D126. Residues 124–126 (DAD), 153–155 (NSG), 180–184 (TGGDQ), and 248–255 (HYTLGPLK) each bind substrate. H248 contributes to the Mn(2+) binding site. 5 helical membrane-spanning segments follow: residues 293–313 (DELVVKFLFLLPLCALLFCIY), 375–395 (VSVVVCFTAVLLSLGISFAIV), 406–426 (VLVYEWTFTIFFLLFGVFLLF), 468–488 (MAFLAIAAVSLPYILGITALF), and 494–514 (MVGLAIILAAFMTYASEHLAV).

Belongs to the glycosyltransferase 8 family. Glycogenin subfamily. Mn(2+) is required as a cofactor. As to expression, expressed in seedlings, roots, leaves, stems and siliques.

The protein resides in the golgi apparatus membrane. It catalyses the reaction glucuronate acceptor + UDP-alpha-D-glucuronate = acceptor beta-D-glucuronoside + UDP + H(+). The enzyme catalyses a 1D-myo-inositol-1-phospho-N-[(R)-2-hydroxy-very-long-chain fatty acyl]-(R)-4-hydroxysphingoid base + UDP-alpha-D-glucuronate = an alpha-D-glucuronosyl-(1&lt;-&gt;6)-1D-myo-inositol-1-phospho-N-[(R)-2-hydroxy-very-long-chain fatty acyl]-(R)-4-hydroxysphingoid base + UDP + H(+). It functions in the pathway sphingolipid metabolism. Mediates the transfer of glucuronic acid (GlcA) from UDP-GlcA to glycosyl inositol phosphorylceramides (GIPCs). The formation of GIPCs sphingolipids is essential for pollen function, plant growth and defense. Required for global fitness. The chain is Inositol phosphorylceramide glucuronosyltransferase 1 from Arabidopsis thaliana (Mouse-ear cress).